The sequence spans 427 residues: Peptidase B (427 aa).

Residues Lys195 and Asp200 each coordinate Mn(2+). Residue Lys207 is part of the active site. Mn(2+) is bound by residues Asp218, Asp277, and Glu279. Arg281 is a catalytic residue.

It belongs to the peptidase M17 family. Homohexamer. It depends on Mn(2+) as a cofactor.

The protein localises to the cytoplasm. The enzyme catalyses Release of an N-terminal amino acid, Xaa, from a peptide or arylamide. Xaa is preferably Glu or Asp but may be other amino acids, including Leu, Met, His, Cys and Gln.. In terms of biological role, probably plays an important role in intracellular peptide degradation. This is Peptidase B from Escherichia coli (strain K12 / MC4100 / BW2952).